We begin with the raw amino-acid sequence, 237 residues long: RING finger protein vilya (237 aa).

The segment at 21 to 69 (CNSCCALFCDKKHTFFLLACHHVFCERCVKVSAGRTPSDAPIFECSTCR) adopts an RING-type zinc-finger fold. A disordered region spans residues 172 to 237 (MHRMAQAYRS…IHPPNNSFDL (66 aa)). Positions 180–195 (RSRSLTSQSSSSAQRS) are enriched in low complexity. Residues 221–237 (RQQITSFIHPPNNSFDL) are compositionally biased toward polar residues.

In terms of assembly, may interact with itself and with narya and nenya through their RING-type zinc fingers. Expressed in nurse cell and pro-oocytes (at protein level).

It is found in the chromosome. Functionally, required for the formation of DNA double-strand breaks during meiosis together with narya and nenya. The polypeptide is RING finger protein vilya (Drosophila melanogaster (Fruit fly)).